Here is a 228-residue protein sequence, read N- to C-terminus: Eukaryotic translation initiation factor 6 (228 aa).

Belongs to the eIF-6 family. Monomer. Associates with the 60S ribosomal subunit.

It is found in the cytoplasm. It localises to the nucleus. The protein localises to the nucleolus. Its function is as follows. Binds to the 60S ribosomal subunit and prevents its association with the 40S ribosomal subunit to form the 80S initiation complex in the cytoplasm. May also be involved in ribosome biogenesis. The protein is Eukaryotic translation initiation factor 6 of Guillardia theta (Cryptophyte).